Consider the following 115-residue polypeptide: Transmembrane protein 218 (115 aa).

3 consecutive transmembrane segments (helical) span residues 5–25 (VLGV…VLLL), 38–58 (FSVI…LLFP), and 81–101 (YVLL…VLIH).

The protein belongs to the TMEM218 family. As to quaternary structure, interacts with TMEM67.

It localises to the membrane. Its subcellular location is the cell projection. It is found in the cilium. Its function is as follows. May be involved in ciliary biogenesis or function. This Homo sapiens (Human) protein is Transmembrane protein 218 (TMEM218).